We begin with the raw amino-acid sequence, 249 residues long: MRWVSMRVIKVGGSVLENLEKVFKPEIFRDAVVVHGGSRYVDELAKKLGLNVEKLTSPSGVTFRRTTRKVLDVYIAAVMKANRELVSFLRRQGIEAIGVSGVKEVIIGRRKKLIKAVINGKIMAIRDDYSGIIKEVNVEMIRNYMKVGVPVIAPIAYDPVENVPLNVDGDKVAYHVALALKSRELYFLSDTAFLINGEVIDKIPRNRIEEYFPYSSGGMRKKLLMAKKAIESGVERVIIEGLNGRTVIS.

Residues R64 and N166 each coordinate substrate.

It belongs to the acetylglutamate kinase family. LysZ subfamily.

The protein resides in the cytoplasm. It catalyses the reaction [amino-group carrier protein]-C-terminal-N-(1,4-dicarboxybutan-1-yl)-L-glutamine + ATP = [amino-group carrier protein]-C-terminal-N-(1-carboxy-5-phosphooxy-5-oxopentan-1-yl)-L-glutamine + ADP. The enzyme catalyses [amino-group carrier protein]-C-terminal-gamma-(L-glutamyl)-L-glutamate + ATP = [amino-group carrier protein]-C-terminal-gamma-(5-phospho-L-glutamyl)-L-glutamate + ADP. Its pathway is amino-acid biosynthesis; L-lysine biosynthesis via AAA pathway; L-lysine from L-alpha-aminoadipate (Thermus route): step 2/5. It participates in amino-acid biosynthesis; L-arginine biosynthesis. Involved in both the arginine and lysine biosynthetic pathways. Phosphorylates the LysW-bound precursors glutamate (for arginine biosynthesis), respectively alpha-aminoadipate (for lysine biosynthesis). The sequence is that of Putative [LysW]-aminoadipate/[LysW]-glutamate kinase from Pyrococcus horikoshii (strain ATCC 700860 / DSM 12428 / JCM 9974 / NBRC 100139 / OT-3).